A 997-amino-acid polypeptide reads, in one-letter code: Glutamate [NMDA] receptor subunit 1 (997 aa).

The N-terminal stretch at 1–26 (MAMAEFVFCRPLFGLAIVLLVAPIDA) is a signal peptide. Over 27–573 (AQRHTASDNP…TLVSFLQPFS (547 aa)) the chain is Extracellular. N-linked (GlcNAc...) asparagine glycans are attached at residues N258, N314, N345, N397, N454, N481, and N501. Glycine contacts are provided by residues 530-532 (PLT) and R537. The chain crosses the membrane as a helical span at residues 574–594 (NTLWILVMVSVHVVALVLYLL). Topologically, residues 595-651 (DRFSPFGRFKLSHSDSNEEKALNLSSAVWFAWGVLLNSGIGEGTPRSFSARVLGMVW) are cytoplasmic. A helical membrane pass occupies residues 652-672 (AGFAMIIVASYTANLAAFLVL). At 673–831 (ERPKTKLSGI…KTPNTLGLKN (159 aa)) the chain is on the extracellular side. An N-linked (GlcNAc...) asparagine glycan is attached at N693. S703 and D747 together coordinate glycine. A helical membrane pass occupies residues 832–852 (MAGVFILVGVGIAGGVGLIII). Over 853–997 (EVIYKKHQVK…YTSDVSHLVV (145 aa)) the chain is Cytoplasmic. Residues 970-997 (LGKTRPQQSVLPPRYSPGYTSDVSHLVV) form a disordered region. A compositionally biased stretch (polar residues) spans 987–997 (GYTSDVSHLVV).

This sequence belongs to the glutamate-gated ion channel (TC 1.A.10.1) family. As to quaternary structure, forms a heteromeric NMDA channel with Nmdar2. Highly expressed in adult heads: in the brain and ring gland. Low expression throughout the entire brain is also seen. Higher expression levels were observed in some scattered cell bodies and part of their fibers, including those from several pairs of DPM (dorsal-posterior-medial) neurons surrounding the calyx, DAL (dorsal-anterior-lateral) and DPL (dorsal-posterior-lateral) neurons in the lateral protocerebrum (LP), VAL (ventral-anterior-lateral) neurons in the anterior protocerebrum, and two pairs of VP (ventral-posterior) neurons in the posterior protocerebrum. Many cell bodies in the optic lobes show preferential expression. Punctuate expression is notably detected in many brain regions including the superior medial protocerebrum. Weakly expressed in the antennal lobes and central complex.

The protein resides in the cell membrane. It is found in the postsynaptic cell membrane. It localises to the postsynaptic density. NMDA receptor subtype of glutamate-gated ion channels with high calcium permeability and voltage-dependent sensitivity to magnesium. Mediated by glycine. This protein plays a key role in synaptic plasticity, synaptogenesis, excitotoxicity, memory acquisition and learning. It mediates neuronal functions in glutamate neurotransmission. Is involved in the cell surface targeting of NMDA receptors. Plays a role in associative learning and in long-term memory consolidation. The polypeptide is Glutamate [NMDA] receptor subunit 1 (Drosophila melanogaster (Fruit fly)).